The following is a 34-amino-acid chain: Mu-theraphotoxin-CCy1a (34 aa).

Intrachain disulfides connect Cys3-Cys18, Cys10-Cys23, and Cys17-Cys30.

The protein belongs to the neurotoxin 10 (Hwtx-1) family. 14 (Hntx-1) subfamily. Expressed by the venom gland.

The protein localises to the secreted. Voltage-gated sodium channel Nav1.7/SCN9A inhibitor. The polypeptide is Mu-theraphotoxin-CCy1a (Chromatopelma cyaneopubescens (Greenbottle blue tarantula)).